We begin with the raw amino-acid sequence, 103 residues long: Small ribosomal subunit protein uS10 (103 aa).

Belongs to the universal ribosomal protein uS10 family. As to quaternary structure, part of the 30S ribosomal subunit.

Functionally, involved in the binding of tRNA to the ribosomes. This Cellvibrio japonicus (strain Ueda107) (Pseudomonas fluorescens subsp. cellulosa) protein is Small ribosomal subunit protein uS10.